The primary structure comprises 149 residues: Calmodulin-6 (149 aa).

EF-hand domains follow at residues 8–43 (DQISEFKEAFSLFDKDGDGCITTKELGTVMRSLGQN), 44–79 (PTEAELQDMINEVDADGNGTIDFPEFLNLMARKMKD), 81–116 (DSEEELKEAFRVFDKDQNGFISAAELRHVMTNLGEK), and 117–149 (LSDEEVDEMIREADVDGDGQINYEEFVKVMMAK). Ca(2+) contacts are provided by Asp-21, Asp-23, Asp-25, Cys-27, Glu-32, Asp-57, Asp-59, Asn-61, Thr-63, Glu-68, Asp-94, Asp-96, Asn-98, Glu-105, Asp-130, Asp-132, Asp-134, Gln-136, and Glu-141.

The protein belongs to the calmodulin family. Interacts with KCBP.

Calmodulin mediates the control of a large number of enzymes, ion channels and other proteins by Ca(2+). Among the enzymes to be stimulated by the calmodulin-Ca(2+) complex are a number of protein kinases and phosphatases. This chain is Calmodulin-6 (CAM6), found in Arabidopsis thaliana (Mouse-ear cress).